The chain runs to 173 residues: Photosystem I assembly protein Ycf3 (173 aa).

TPR repeat units lie at residues 35–68, 72–105, and 120–153; these read AYLY…EDNQ, GETL…NPKQ, and GRMA…YPGG.

It belongs to the Ycf3 family.

Its subcellular location is the cellular thylakoid membrane. Its function is as follows. Essential for the assembly of the photosystem I (PSI) complex. May act as a chaperone-like factor to guide the assembly of the PSI subunits. This Prochlorococcus marinus (strain NATL1A) protein is Photosystem I assembly protein Ycf3.